We begin with the raw amino-acid sequence, 476 residues long: Sedoheptulokinase (476 aa).

The protein belongs to the FGGY kinase family.

It localises to the cytoplasm. It carries out the reaction sedoheptulose + ATP = D-sedoheptulose 7-phosphate + ADP + H(+). In terms of biological role, acts as a modulator of macrophage activation through control of glucose metabolism. In Mus musculus (Mouse), this protein is Sedoheptulokinase (Shpk).